Consider the following 128-residue polypeptide: Fluoride-specific ion channel FluC (128 aa).

Helical transmembrane passes span 2 to 22 (LTFA…GAWL), 37 to 57 (WGTL…VALI), 65 to 85 (AWIR…FSTF), and 101 to 121 (AAAY…LGLA). Positions 77 and 80 each coordinate Na(+).

Belongs to the fluoride channel Fluc/FEX (TC 1.A.43) family.

It localises to the cell inner membrane. The catalysed reaction is fluoride(in) = fluoride(out). With respect to regulation, na(+) is not transported, but it plays an essential structural role and its presence is essential for fluoride channel function. Its function is as follows. Fluoride-specific ion channel. Important for reducing fluoride concentration in the cell, thus reducing its toxicity. This Bordetella bronchiseptica (strain ATCC BAA-588 / NCTC 13252 / RB50) (Alcaligenes bronchisepticus) protein is Fluoride-specific ion channel FluC.